An 81-amino-acid chain; its full sequence is uncharacterized protein (81 aa).

This is an uncharacterized protein from Bacillus subtilis (strain 168).